The sequence spans 366 residues: Glycine betaine monooxygenase reductase subunit (366 aa).

Positions 16 to 119 (NGRHLVRCVK…HGPVGLFNAI (104 aa)) constitute an FAD-binding FR-type domain. The region spanning 282–366 (HQVEFTATGK…VPKGDVVIDY (85 aa)) is the 2Fe-2S ferredoxin-type domain. Residues Cys316, Cys321, Cys324, and Cys354 each contribute to the [2Fe-2S] cluster site.

This sequence in the N-terminal section; belongs to the FAD-binding oxidoreductase type 6 family. As to quaternary structure, the system is composed of an oxygenase subunit (GbcA) and a reductase subunit (GbcB). The cofactor is FAD. It depends on [2Fe-2S] cluster as a cofactor.

It carries out the reaction glycine betaine + NADH + O2 + H(+) = N,N-dimethylglycine + formaldehyde + NAD(+) + H2O. Its function is as follows. Involved in degradation of glycine betaine. Part of a Rieske-type oxygenase system that catalyzes the conversion of glycine betaine (GB) to dimethylglycine (DMG). This subunit is the ferredoxin reductase component of the system. Required for growth on choline and GB, but not for growth on DMG. The polypeptide is Glycine betaine monooxygenase reductase subunit (Pseudomonas aeruginosa (strain ATCC 15692 / DSM 22644 / CIP 104116 / JCM 14847 / LMG 12228 / 1C / PRS 101 / PAO1)).